The following is a 62-amino-acid chain: Photosystem II reaction center protein Z (62 aa).

A run of 2 helical transmembrane segments spans residues 8-28 and 41-61; these read AVFA…VVLA and FSGA…NSFI.

It belongs to the PsbZ family. As to quaternary structure, PSII is composed of 1 copy each of membrane proteins PsbA, PsbB, PsbC, PsbD, PsbE, PsbF, PsbH, PsbI, PsbJ, PsbK, PsbL, PsbM, PsbT, PsbY, PsbZ, Psb30/Ycf12, at least 3 peripheral proteins of the oxygen-evolving complex and a large number of cofactors. It forms dimeric complexes.

The protein resides in the plastid. It localises to the chloroplast thylakoid membrane. Its function is as follows. May control the interaction of photosystem II (PSII) cores with the light-harvesting antenna, regulates electron flow through the 2 photosystem reaction centers. PSII is a light-driven water plastoquinone oxidoreductase, using light energy to abstract electrons from H(2)O, generating a proton gradient subsequently used for ATP formation. This chain is Photosystem II reaction center protein Z, found in Anthoceros angustus (Hornwort).